The primary structure comprises 210 residues: Na(+)-translocating NADH-quinone reductase subunit D (210 aa).

Helical transmembrane passes span 11–31, 42–62, 70–90, 103–123, 131–151, and 178–198; these read ILAP…VCSA, FVMT…VSLI, VRII…DQIL, VFVG…AFAM, FIDG…VGFF, and NGLM…IWAI.

It belongs to the NqrDE/RnfAE family. Composed of six subunits; NqrA, NqrB, NqrC, NqrD, NqrE and NqrF.

The protein resides in the cell inner membrane. The enzyme catalyses a ubiquinone + n Na(+)(in) + NADH + H(+) = a ubiquinol + n Na(+)(out) + NAD(+). Its function is as follows. NQR complex catalyzes the reduction of ubiquinone-1 to ubiquinol by two successive reactions, coupled with the transport of Na(+) ions from the cytoplasm to the periplasm. NqrA to NqrE are probably involved in the second step, the conversion of ubisemiquinone to ubiquinol. In Vibrio anguillarum (Listonella anguillarum), this protein is Na(+)-translocating NADH-quinone reductase subunit D.